Reading from the N-terminus, the 383-residue chain is F-box/kelch-repeat protein At2g29830 (383 aa).

Residues 1–21 form a disordered region; it reads MVVLSEIPGDPNEDNQNENPQ. Acidic residues predominate over residues 11–21; that stretch reads PNEDNQNENPQ. The F-box domain maps to 27 to 73; the sequence is LPILLQLPEELIASIVALIPRCHYPSLSLVSRAFRHLITSQELYVAR. 5 Kelch repeats span residues 130–178, 179–224, 226–272, 274–317, and 324–370; these read KMYV…IIDG, RIYV…FITY, VMQG…VVGD, LYAL…YTST, and KLVI…RDLP.

This chain is F-box/kelch-repeat protein At2g29830, found in Arabidopsis thaliana (Mouse-ear cress).